The following is a 393-amino-acid chain: Proteasome-activating nucleotidase (393 aa).

Positions 14 to 53 form a coiled coil; sequence SDEVQLVRLLEEKIKSLQIEIENLRKELNYYKAEMEKMLS. ATP is bound by residues 178 to 183 and Y317; that span reads GTGKTM. The tract at residues 391-393 is docks into pockets in the proteasome alpha-ring to cause gate opening; it reads KYS.

It belongs to the AAA ATPase family. As to quaternary structure, homohexamer. The hexameric complex has a two-ring architecture resembling a top hat that caps the 20S proteasome core at one or both ends. Upon ATP-binding, the C-terminus of PAN interacts with the alpha-rings of the proteasome core by binding to the intersubunit pockets.

It is found in the cytoplasm. Its function is as follows. ATPase which is responsible for recognizing, binding, unfolding and translocation of substrate proteins into the archaeal 20S proteasome core particle. Is essential for opening the gate of the 20S proteasome via an interaction with its C-terminus, thereby allowing substrate entry and access to the site of proteolysis. Thus, the C-termini of the proteasomal ATPase function like a 'key in a lock' to induce gate opening and therefore regulate proteolysis. Unfolding activity requires energy from ATP hydrolysis, whereas ATP binding alone promotes ATPase-20S proteasome association which triggers gate opening, and supports translocation of unfolded substrates. The chain is Proteasome-activating nucleotidase from Saccharolobus islandicus (strain Y.N.15.51 / Yellowstone #2) (Sulfolobus islandicus).